The following is a 158-amino-acid chain: GTP-dependent dephospho-CoA kinase (158 aa).

GTP contacts are provided by Asp-35, Val-36, Asp-54, Lys-56, Glu-109, and Asp-132.

It belongs to the GTP-dependent DPCK family.

The enzyme catalyses 3'-dephospho-CoA + GTP = GDP + CoA + H(+). It functions in the pathway cofactor biosynthesis; coenzyme A biosynthesis. Its function is as follows. Catalyzes the GTP-dependent phosphorylation of the 3'-hydroxyl group of dephosphocoenzyme A to form coenzyme A (CoA). This Methanococcus maripaludis (strain C7 / ATCC BAA-1331) protein is GTP-dependent dephospho-CoA kinase.